The primary structure comprises 505 residues: Glycerol kinase (505 aa).

Threonine 14 contacts ADP. Positions 14, 15, and 16 each coordinate ATP. Residue threonine 14 participates in sn-glycerol 3-phosphate binding. Arginine 18 is an ADP binding site. The sn-glycerol 3-phosphate site is built by arginine 84, glutamate 85, tyrosine 136, and aspartate 246. Arginine 84, glutamate 85, tyrosine 136, aspartate 246, and glutamine 247 together coordinate glycerol. ADP is bound by residues threonine 268 and glycine 311. Threonine 268, glycine 311, glutamine 315, and glycine 412 together coordinate ATP. Positions 412 and 416 each coordinate ADP.

Belongs to the FGGY kinase family.

It carries out the reaction glycerol + ATP = sn-glycerol 3-phosphate + ADP + H(+). It functions in the pathway polyol metabolism; glycerol degradation via glycerol kinase pathway; sn-glycerol 3-phosphate from glycerol: step 1/1. Its activity is regulated as follows. Inhibited by fructose 1,6-bisphosphate (FBP). Key enzyme in the regulation of glycerol uptake and metabolism. Catalyzes the phosphorylation of glycerol to yield sn-glycerol 3-phosphate. The protein is Glycerol kinase of Vibrio campbellii (strain ATCC BAA-1116).